We begin with the raw amino-acid sequence, 353 residues long: Photosystem II protein D1 (353 aa).

An N-acetylthreonine modification is found at Thr-2. A Phosphothreonine modification is found at Thr-2. 3 consecutive transmembrane segments (helical) span residues 29–46 (YIGWFGVIMIPCLLTAIS), 118–133 (HFLLGIACYMGREWEL), and 142–156 (WIAVAYSAPVAAATA). His-118 contacts chlorophyll a. Tyr-126 contacts pheophytin a. Residues Asp-170 and Glu-189 each contribute to the [CaMn4O5] cluster site. Residues 197-218 (FHMLGVAGVFGGSLFSAMHGSL) form a helical membrane-spanning segment. A chlorophyll a-binding site is contributed by His-198. A quinone-binding positions include His-215 and 264–265 (SF). His-215 lines the Fe cation pocket. His-272 provides a ligand contact to Fe cation. Residues 274-288 (FLAVWPVVGIWFTAM) traverse the membrane as a helical segment. The [CaMn4O5] cluster site is built by His-332, Glu-333, Asp-342, and Ala-344. Positions 345-353 (SVEAPAVNG) are excised as a propeptide.

It belongs to the reaction center PufL/M/PsbA/D family. PSII is composed of 1 copy each of membrane proteins PsbA, PsbB, PsbC, PsbD, PsbE, PsbF, PsbH, PsbI, PsbJ, PsbK, PsbL, PsbM, PsbT, PsbX, PsbY, PsbZ, Psb30/Ycf12, at least 3 peripheral proteins of the oxygen-evolving complex and a large number of cofactors. It forms dimeric complexes. The D1/D2 heterodimer binds P680, chlorophylls that are the primary electron donor of PSII, and subsequent electron acceptors. It shares a non-heme iron and each subunit binds pheophytin, quinone, additional chlorophylls, carotenoids and lipids. D1 provides most of the ligands for the Mn4-Ca-O5 cluster of the oxygen-evolving complex (OEC). There is also a Cl(-1) ion associated with D1 and D2, which is required for oxygen evolution. The PSII complex binds additional chlorophylls, carotenoids and specific lipids. serves as cofactor. In terms of processing, tyr-161 forms a radical intermediate that is referred to as redox-active TyrZ, YZ or Y-Z. C-terminally processed by CTPA; processing is essential to allow assembly of the oxygen-evolving complex and thus photosynthetic growth.

The protein localises to the plastid. It localises to the chloroplast thylakoid membrane. The catalysed reaction is 2 a plastoquinone + 4 hnu + 2 H2O = 2 a plastoquinol + O2. Its function is as follows. Photosystem II (PSII) is a light-driven water:plastoquinone oxidoreductase that uses light energy to abstract electrons from H(2)O, generating O(2) and a proton gradient subsequently used for ATP formation. It consists of a core antenna complex that captures photons, and an electron transfer chain that converts photonic excitation into a charge separation. The D1/D2 (PsbA/PsbD) reaction center heterodimer binds P680, the primary electron donor of PSII as well as several subsequent electron acceptors. This Mesostigma viride (Green alga) protein is Photosystem II protein D1.